Consider the following 103-residue polypeptide: UPF0145 protein NT01CX_0170 (103 aa).

Belongs to the UPF0145 family.

This Clostridium novyi (strain NT) protein is UPF0145 protein NT01CX_0170.